The chain runs to 250 residues: HTH-type transcriptional regulator SarS (250 aa).

2 consecutive DNA-binding regions (H-T-H motif) follow at residues 53–76 (FKKI…VLVK) and 177–200 (LKDL…NLKK).

The protein belongs to the SarA family.

It localises to the cytoplasm. Its function is as follows. Transcriptional regulator that controls expression of some virulence factors in a cell density-dependent manner. This is HTH-type transcriptional regulator SarS (sarS) from Staphylococcus aureus (strain MRSA252).